A 274-amino-acid chain; its full sequence is Elongation factor Ts (274 aa).

Residues 82–85 (TDFV) are involved in Mg(2+) ion dislocation from EF-Tu.

This sequence belongs to the EF-Ts family.

Its subcellular location is the cytoplasm. Its function is as follows. Associates with the EF-Tu.GDP complex and induces the exchange of GDP to GTP. It remains bound to the aminoacyl-tRNA.EF-Tu.GTP complex up to the GTP hydrolysis stage on the ribosome. The sequence is that of Elongation factor Ts from Flavobacterium psychrophilum (strain ATCC 49511 / DSM 21280 / CIP 103535 / JIP02/86).